The sequence spans 252 residues: Imidazole glycerol phosphate synthase subunit HisF (252 aa).

Catalysis depends on residues aspartate 11 and aspartate 130.

Belongs to the HisA/HisF family. In terms of assembly, heterodimer of HisH and HisF.

It is found in the cytoplasm. The enzyme catalyses 5-[(5-phospho-1-deoxy-D-ribulos-1-ylimino)methylamino]-1-(5-phospho-beta-D-ribosyl)imidazole-4-carboxamide + L-glutamine = D-erythro-1-(imidazol-4-yl)glycerol 3-phosphate + 5-amino-1-(5-phospho-beta-D-ribosyl)imidazole-4-carboxamide + L-glutamate + H(+). It participates in amino-acid biosynthesis; L-histidine biosynthesis; L-histidine from 5-phospho-alpha-D-ribose 1-diphosphate: step 5/9. Functionally, IGPS catalyzes the conversion of PRFAR and glutamine to IGP, AICAR and glutamate. The HisF subunit catalyzes the cyclization activity that produces IGP and AICAR from PRFAR using the ammonia provided by the HisH subunit. In Persephonella marina (strain DSM 14350 / EX-H1), this protein is Imidazole glycerol phosphate synthase subunit HisF.